We begin with the raw amino-acid sequence, 102 residues long: MANKKIRIRLKAYKHRTLDTAAAKIVESATRTGAQVAGPIPLPTERSLYTIIRATHKYKDSREQFEMRTHKRLIDIVNPTQKTVDALMKLDLPSGVNVEIKL.

The protein belongs to the universal ribosomal protein uS10 family. Part of the 30S ribosomal subunit.

Involved in the binding of tRNA to the ribosomes. This Streptococcus pneumoniae (strain Taiwan19F-14) protein is Small ribosomal subunit protein uS10.